A 689-amino-acid polypeptide reads, in one-letter code: Zinc finger protein 185 (689 aa).

2 disordered regions span residues 1 to 253 (MSIS…GRTK) and 298 to 534 (APDV…SCTS). Residues 35–52 (LKGDKSWITKQDESEGRT) show a composition bias toward basic and acidic residues. Phosphoserine is present on Ser-66. Residues 95-114 (IDSSSQPQQQFPKANGTPKS) show a composition bias toward polar residues. The residue at position 153 (Ser-153) is a Phosphoserine. Positions 157 to 166 (DTEEEEEEEV) are enriched in acidic residues. At Pro-206 the chain carries Phosphoserine. Composition is skewed to basic and acidic residues over residues 217-232 (KRVE…EKSQ) and 310-331 (NKDK…EEAF). The segment covering 338-349 (AARSSAQLSDGN) has biased composition (polar residues). 2 stretches are compositionally biased toward low complexity: residues 373–382 (SSSATSVSAV) and 434–444 (DPAVPAQQPAD). Thr-447 carries the post-translational modification Phosphothreonine. Over residues 448 to 458 (PERQSSPSGSE) the composition is skewed to polar residues. 2 positions are modified to phosphoserine: Ser-453 and Ser-465. The segment covering 504-524 (PTQQPADPSTPEQQNSPSGSE) has biased composition (polar residues). In terms of domain architecture, LIM zinc-binding spans 627-689 (GICTYCNREI…HCGKCYEKLF (63 aa)).

As to expression, expressed in placenta, pancreas and kidney. Also expressed in prostate, testis, ovary and blood.

It is found in the cytoplasm. The protein localises to the cytoskeleton. The protein resides in the cell junction. It localises to the focal adhesion. Its function is as follows. May be involved in the regulation of cellular proliferation and/or differentiation. The protein is Zinc finger protein 185 (ZNF185) of Homo sapiens (Human).